We begin with the raw amino-acid sequence, 401 residues long: Serine--glyoxylate aminotransferase (401 aa).

The residue at position 1 (Met1) is an N-acetylmethionine. Pyridoxal 5'-phosphate-binding positions include Thr68–Thr70, Thr148, and Gln200–Lys201. Lys201 provides a ligand contact to 3-hydroxypyruvate. Lys201 is modified (N6-(pyridoxal phosphate)lysine). Ser204 bears the Phosphoserine mark. Residue Arg347 participates in 3-hydroxypyruvate binding. A Microbody targeting signal motif is present at residues Ser399–Ile401.

Belongs to the class-V pyridoxal-phosphate-dependent aminotransferase family. Forms homodimers. Interacts with RABGAP22. It depends on pyridoxal 5'-phosphate as a cofactor. Widely expressed. Preferentially expressed in green, leafy tissues, root cortex and epidermis, developing siliques and dry seeds.

It is found in the peroxisome. The enzyme catalyses glyoxylate + L-serine = 3-hydroxypyruvate + glycine. It carries out the reaction glyoxylate + L-alanine = glycine + pyruvate. The catalysed reaction is L-serine + pyruvate = 3-hydroxypyruvate + L-alanine. It catalyses the reaction 3-hydroxypyruvate + L-asparagine = 2-oxosuccinamate + L-serine. The enzyme catalyses L-asparagine + glyoxylate = 2-oxosuccinamate + glycine. It carries out the reaction L-asparagine + pyruvate = 2-oxosuccinamate + L-alanine. Its activity is regulated as follows. Inhibited by aminooxyacetate and beta-chloro-L-alanine, but not by p-hydroxymercuribenzoate. Functionally, photorespiratory enzyme that catalyzes transamination reactions with multiple substrates, including asparagine. Functions exclusively as a catabolic enzyme in Asn metabolism. Involved in root development during seedling establishment after seed germination by regulating serine homeostasis and acetate conversion. The sequence is that of Serine--glyoxylate aminotransferase from Arabidopsis thaliana (Mouse-ear cress).